The following is a 124-amino-acid chain: S-adenosylmethionine decarboxylase proenzyme (124 aa).

Ser63 acts as the Schiff-base intermediate with substrate; via pyruvic acid in catalysis. Residue Ser63 is modified to Pyruvic acid (Ser); by autocatalysis. His68 acts as the Proton acceptor; for processing activity in catalysis. Catalysis depends on Cys83, which acts as the Proton donor; for catalytic activity.

The protein belongs to the prokaryotic AdoMetDC family. Type 1 subfamily. As to quaternary structure, heterotetramer of two alpha and two beta chains arranged as a dimer of alpha/beta heterodimers. Pyruvate is required as a cofactor. Is synthesized initially as an inactive proenzyme. Formation of the active enzyme involves a self-maturation process in which the active site pyruvoyl group is generated from an internal serine residue via an autocatalytic post-translational modification. Two non-identical subunits are generated from the proenzyme in this reaction, and the pyruvate is formed at the N-terminus of the alpha chain, which is derived from the carboxyl end of the proenzyme. The post-translation cleavage follows an unusual pathway, termed non-hydrolytic serinolysis, in which the side chain hydroxyl group of the serine supplies its oxygen atom to form the C-terminus of the beta chain, while the remainder of the serine residue undergoes an oxidative deamination to produce ammonia and the pyruvoyl group blocking the N-terminus of the alpha chain.

The enzyme catalyses S-adenosyl-L-methionine + H(+) = S-adenosyl 3-(methylsulfanyl)propylamine + CO2. The protein operates within amine and polyamine biosynthesis; S-adenosylmethioninamine biosynthesis; S-adenosylmethioninamine from S-adenosyl-L-methionine: step 1/1. Functionally, catalyzes the decarboxylation of S-adenosylmethionine to S-adenosylmethioninamine (dcAdoMet), the propylamine donor required for the synthesis of the polyamines spermine and spermidine from the diamine putrescine. This is S-adenosylmethionine decarboxylase proenzyme from Thermoanaerobacter pseudethanolicus (strain ATCC 33223 / 39E) (Clostridium thermohydrosulfuricum).